Consider the following 368-residue polypeptide: 4-hydroxy-3-methylbut-2-en-1-yl diphosphate synthase (flavodoxin) (368 aa).

Positions 271, 274, 306, and 313 each coordinate [4Fe-4S] cluster.

It belongs to the IspG family. Requires [4Fe-4S] cluster as cofactor.

The enzyme catalyses (2E)-4-hydroxy-3-methylbut-2-enyl diphosphate + oxidized [flavodoxin] + H2O + 2 H(+) = 2-C-methyl-D-erythritol 2,4-cyclic diphosphate + reduced [flavodoxin]. Its pathway is isoprenoid biosynthesis; isopentenyl diphosphate biosynthesis via DXP pathway; isopentenyl diphosphate from 1-deoxy-D-xylulose 5-phosphate: step 5/6. Functionally, converts 2C-methyl-D-erythritol 2,4-cyclodiphosphate (ME-2,4cPP) into 1-hydroxy-2-methyl-2-(E)-butenyl 4-diphosphate. This chain is 4-hydroxy-3-methylbut-2-en-1-yl diphosphate synthase (flavodoxin), found in Haemophilus influenzae (strain ATCC 51907 / DSM 11121 / KW20 / Rd).